The sequence spans 372 residues: Ribosomal RNA small subunit methyltransferase H (372 aa).

Residues Gly-78 to His-80, Asp-97, Tyr-124, Asp-148, and Gln-155 contribute to the S-adenosyl-L-methionine site.

It belongs to the methyltransferase superfamily. RsmH family.

The protein localises to the cytoplasm. The enzyme catalyses cytidine(1402) in 16S rRNA + S-adenosyl-L-methionine = N(4)-methylcytidine(1402) in 16S rRNA + S-adenosyl-L-homocysteine + H(+). Specifically methylates the N4 position of cytidine in position 1402 (C1402) of 16S rRNA. The polypeptide is Ribosomal RNA small subunit methyltransferase H (Mycobacterium leprae (strain Br4923)).